The primary structure comprises 720 residues: Protein O-mannosyl-transferase 1 (720 aa).

8 helical membrane-spanning segments follow: residues 7–27 (PVSVTVEINVLLLAVTALALF), 67–87 (FGHMILALGAYLGGFDGNFVW), 105–125 (LIPALAGSFCVPLAYLVVVEL), 127–147 (YSHFSALGACALLLMENSLIV), 150–170 (RFMLLESVLIFFLLLAVLSYL), 178–198 (SFFKWFWLVICGVSCAFGIGV), 201–221 (MGMFTYFLLLSLAAVHTWQLI), and 239–259 (FLALVVLPVIMYLGFFYIHLT). MIR domains follow at residues 291–354 (PLDV…IKDP), 365–422 (PKPV…VDIV), and 426–486 (SEKE…VEEH). 4 consecutive transmembrane segments (helical) span residues 570–590 (IVTWTTGNITLVVYCLLFLTY), 609–629 (LVLAGVVCLGGWAVNYLPFFL), 633–653 (TLFLYHYLPALTFKILQIPIV), and 670–690 (AFGGVILAVLCSVYMSYHSLS).

Belongs to the glycosyltransferase 39 family. Widely expressed. Has particularly strong expression in testis, ovary, brain, liver and heart.

Its subcellular location is the endoplasmic reticulum membrane. The enzyme catalyses a di-trans,poly-cis-dolichyl beta-D-mannosyl phosphate + L-seryl-[protein] = 3-O-(alpha-D-mannosyl)-L-seryl-[protein] + a di-trans,poly-cis-dolichyl phosphate + H(+). It catalyses the reaction a di-trans,poly-cis-dolichyl beta-D-mannosyl phosphate + L-threonyl-[protein] = 3-O-(alpha-D-mannosyl)-L-threonyl-[protein] + a di-trans,poly-cis-dolichyl phosphate + H(+). It functions in the pathway protein modification; protein glycosylation. Its function is as follows. Transfers mannosyl residues to the hydroxyl group of serine or threonine residues. Coexpression of both POMT1 and POMT2 is necessary for enzyme activity, expression of either POMT1 or POMT2 alone is insufficient. In Danio rerio (Zebrafish), this protein is Protein O-mannosyl-transferase 1.